The primary structure comprises 87 residues: Large ribosomal subunit protein bL27 (87 aa).

A disordered region spans residues methionine 1 to lysine 24.

The protein belongs to the bacterial ribosomal protein bL27 family.

The sequence is that of Large ribosomal subunit protein bL27 from Rickettsia massiliae (strain Mtu5).